Reading from the N-terminus, the 262-residue chain is Phosphatidylserine decarboxylase proenzyme (262 aa).

Residues Asp86, His142, and Ser226 each act as charge relay system; for autoendoproteolytic cleavage activity in the active site. The active-site Schiff-base intermediate with substrate; via pyruvic acid; for decarboxylase activity is the Ser226. Residue Ser226 is modified to Pyruvic acid (Ser); by autocatalysis.

It belongs to the phosphatidylserine decarboxylase family. PSD-B subfamily. Prokaryotic type I sub-subfamily. In terms of assembly, heterodimer of a large membrane-associated beta subunit and a small pyruvoyl-containing alpha subunit. It depends on pyruvate as a cofactor. Is synthesized initially as an inactive proenzyme. Formation of the active enzyme involves a self-maturation process in which the active site pyruvoyl group is generated from an internal serine residue via an autocatalytic post-translational modification. Two non-identical subunits are generated from the proenzyme in this reaction, and the pyruvate is formed at the N-terminus of the alpha chain, which is derived from the carboxyl end of the proenzyme. The autoendoproteolytic cleavage occurs by a canonical serine protease mechanism, in which the side chain hydroxyl group of the serine supplies its oxygen atom to form the C-terminus of the beta chain, while the remainder of the serine residue undergoes an oxidative deamination to produce ammonia and the pyruvoyl prosthetic group on the alpha chain. During this reaction, the Ser that is part of the protease active site of the proenzyme becomes the pyruvoyl prosthetic group, which constitutes an essential element of the active site of the mature decarboxylase.

The protein localises to the cell membrane. It catalyses the reaction a 1,2-diacyl-sn-glycero-3-phospho-L-serine + H(+) = a 1,2-diacyl-sn-glycero-3-phosphoethanolamine + CO2. It participates in phospholipid metabolism; phosphatidylethanolamine biosynthesis; phosphatidylethanolamine from CDP-diacylglycerol: step 2/2. Its function is as follows. Catalyzes the formation of phosphatidylethanolamine (PtdEtn) from phosphatidylserine (PtdSer). This chain is Phosphatidylserine decarboxylase proenzyme, found in Bacillus cereus (strain ATCC 10987 / NRS 248).